Consider the following 374-residue polypeptide: MSAIFSFQSLARCSQTKARSGIFLTPHGIVETPRFMPVGTLANVKTVTPAQLKETGAQMVLSNTYHLHLQPGEAIVAGGGGLHKFMGWNGPMLTDSGGFQVFSLSEMRKITEEGVTFRSPRDGQIIKLTPERSIEIQNILGADVIMAFDECPPYPANRQEVEAATERTYRWLERCITAHQRQDQALFGIVQGGVYLDLRAKAANTLTELDLPGYAIGGVSVGEPPEMMAQIVQATAPLLPAHKPRYLMGVGTYREMVIAIASGIDLFDCVIPTRWARHGTAMVKGERWNLKNAKFREDFAPIDETCPCYACQNFSRAYISHLVRSQEILAYTLLSIHNITELIRFTQKIREAILSDRFLEEFGHWLNSAETDNR.

Asp-95 serves as the catalytic Proton acceptor. Substrate contacts are provided by residues 95 to 99 (DSGGF), Asp-149, Gln-191, and Gly-218. The segment at 249–255 (GVGTYRE) is RNA binding. Asp-268 (nucleophile) is an active-site residue. Positions 273–277 (TRWAR) are RNA binding; important for wobble base 34 recognition. Residues Cys-306, Cys-308, Cys-311, and His-337 each coordinate Zn(2+).

Belongs to the queuine tRNA-ribosyltransferase family. Homodimer. Within each dimer, one monomer is responsible for RNA recognition and catalysis, while the other monomer binds to the replacement base PreQ1. The cofactor is Zn(2+).

It catalyses the reaction 7-aminomethyl-7-carbaguanine + guanosine(34) in tRNA = 7-aminomethyl-7-carbaguanosine(34) in tRNA + guanine. The protein operates within tRNA modification; tRNA-queuosine biosynthesis. Its function is as follows. Catalyzes the base-exchange of a guanine (G) residue with the queuine precursor 7-aminomethyl-7-deazaguanine (PreQ1) at position 34 (anticodon wobble position) in tRNAs with GU(N) anticodons (tRNA-Asp, -Asn, -His and -Tyr). Catalysis occurs through a double-displacement mechanism. The nucleophile active site attacks the C1' of nucleotide 34 to detach the guanine base from the RNA, forming a covalent enzyme-RNA intermediate. The proton acceptor active site deprotonates the incoming PreQ1, allowing a nucleophilic attack on the C1' of the ribose to form the product. After dissociation, two additional enzymatic reactions on the tRNA convert PreQ1 to queuine (Q), resulting in the hypermodified nucleoside queuosine (7-(((4,5-cis-dihydroxy-2-cyclopenten-1-yl)amino)methyl)-7-deazaguanosine). The chain is Queuine tRNA-ribosyltransferase from Nostoc sp. (strain PCC 7120 / SAG 25.82 / UTEX 2576).